We begin with the raw amino-acid sequence, 571 residues long: Dehydrocurvularin exporter (571 aa).

The segment at 1–34 is disordered; that stretch reads MADGSDLENNHKPELDRSQPGSTSNGSQEQKDPD. Basic and acidic residues predominate over residues 8–17; sequence ENNHKPELDR. Residues 19–28 are compositionally biased toward polar residues; it reads QPGSTSNGSQ. Residue Asn-25 is glycosylated (N-linked (GlcNAc...) asparagine). The next 14 helical transmembrane spans lie at 47-67, 86-106, 120-140, 143-163, 171-191, 202-222, 238-258, 275-295, 317-337, 350-370, 379-399, 405-425, 443-463, and 514-534; these read ILVM…IGII, WYGS…GKLF, FIFL…SVII, AIQG…INYV, LLIG…PVIG, WCFW…LLFL, IILA…VCLT, VIAT…TEWF, LFCL…PIYF, VNTL…GGVI, FELL…ILDV, MYIG…QIPM, IMVM…QSLF, and VFAF…IIPF. Residues 538–571 form a disordered region; it reads PDHGKKDKPATEEAAEEKSEAEGKVSGDKEENHS.

This sequence belongs to the major facilitator superfamily. TCR/Tet family.

It localises to the cell membrane. In terms of biological role, efflux pump that is probably involved in the export of dehydrocurvularin. The sequence is that of Dehydrocurvularin exporter from Aspergillus terreus.